Reading from the N-terminus, the 315-residue chain is DNA-directed RNA polymerase subunit alpha (315 aa).

Positions 1–228 (MLEIEKPKIE…EHLRLFVGLT (228 aa)) are alpha N-terminal domain (alpha-NTD). The alpha C-terminal domain (alpha-CTD) stretch occupies residues 245-315 (KNKLLEMPIE…LGLDLRHDEE (71 aa)).

It belongs to the RNA polymerase alpha chain family. As to quaternary structure, homodimer. The RNAP catalytic core consists of 2 alpha, 1 beta, 1 beta' and 1 omega subunit. When a sigma factor is associated with the core the holoenzyme is formed, which can initiate transcription.

The enzyme catalyses RNA(n) + a ribonucleoside 5'-triphosphate = RNA(n+1) + diphosphate. DNA-dependent RNA polymerase catalyzes the transcription of DNA into RNA using the four ribonucleoside triphosphates as substrates. In Desulforudis audaxviator (strain MP104C), this protein is DNA-directed RNA polymerase subunit alpha.